The following is a 143-amino-acid chain: UPF0201 protein PAE1632 (143 aa).

The protein belongs to the UPF0201 family.

This chain is UPF0201 protein PAE1632, found in Pyrobaculum aerophilum (strain ATCC 51768 / DSM 7523 / JCM 9630 / CIP 104966 / NBRC 100827 / IM2).